The primary structure comprises 148 residues: Large ribosomal subunit protein uL15 (148 aa).

Residues 1-28 show a composition bias toward basic residues; sequence MIRRRKKVRKLRGSHTHGWGCKKKHRGG. The segment at 1–43 is disordered; sequence MIRRRKKVRKLRGSHTHGWGCKKKHRGGGSKGGRGMAGTGKRK. Gly residues predominate over residues 29–38; that stretch reads GSKGGRGMAG.

The protein belongs to the universal ribosomal protein uL15 family. Part of the 50S ribosomal subunit.

Functionally, binds to the 23S rRNA. The chain is Large ribosomal subunit protein uL15 from Thermococcus kodakarensis (strain ATCC BAA-918 / JCM 12380 / KOD1) (Pyrococcus kodakaraensis (strain KOD1)).